Here is a 196-residue protein sequence, read N- to C-terminus: uncharacterized protein (196 aa).

An HTH tetR-type domain is found at 7–67 (RNTKEKILTA…AVIDNHVKIW (61 aa)). A DNA-binding region (H-T-H motif) is located at residues 30–49 (SINDILDETATGKGQFYYYF).

This is an uncharacterized protein from Lactococcus lactis subsp. lactis (Streptococcus lactis).